The chain runs to 85 residues: Sec-independent protein translocase protein TatA (85 aa).

Residues 1-21 (MGGISIWQLLIIALIVVLLFG) traverse the membrane as a helical segment. The tract at residues 43-85 (MSSDEDKKALEDAEAAKSVQTAQTAQPTQQATEKKPESNKEQA) is disordered. The span at 46–57 (DEDKKALEDAEA) shows a compositional bias: basic and acidic residues. Residues 58-73 (AKSVQTAQTAQPTQQA) show a composition bias toward low complexity. Basic and acidic residues predominate over residues 74-85 (TEKKPESNKEQA).

Belongs to the TatA/E family. The Tat system comprises two distinct complexes: a TatABC complex, containing multiple copies of TatA, TatB and TatC subunits, and a separate TatA complex, containing only TatA subunits. Substrates initially bind to the TatABC complex, which probably triggers association of the separate TatA complex to form the active translocon.

Its subcellular location is the cell inner membrane. Part of the twin-arginine translocation (Tat) system that transports large folded proteins containing a characteristic twin-arginine motif in their signal peptide across membranes. TatA could form the protein-conducting channel of the Tat system. In Shewanella sp. (strain ANA-3), this protein is Sec-independent protein translocase protein TatA.